The sequence spans 355 residues: Glutamyl aminopeptidase (355 aa).

Histidine 65 and aspartate 181 together coordinate a divalent metal cation. Glutamate 213 acts as the Proton acceptor in catalysis. Residues glutamate 214, aspartate 236, and histidine 319 each contribute to the a divalent metal cation site.

The protein belongs to the peptidase M42 family. Requires a divalent metal cation as cofactor.

It carries out the reaction Release of N-terminal glutamate (and to a lesser extent aspartate) from a peptide.. This is Glutamyl aminopeptidase (pepA) from Lactococcus lactis subsp. cremoris (strain MG1363).